A 262-amino-acid chain; its full sequence is uncharacterized protein (262 aa).

The region spanning isoleucine 5–glycine 223 is the ABC transporter domain. Residue glycine 37–threonine 44 coordinates ATP.

This sequence belongs to the ABC transporter superfamily.

This is an uncharacterized protein from Methanocaldococcus jannaschii (strain ATCC 43067 / DSM 2661 / JAL-1 / JCM 10045 / NBRC 100440) (Methanococcus jannaschii).